Here is a 379-residue protein sequence, read N- to C-terminus: Cytochrome b (379 aa).

The next 4 membrane-spanning stretches (helical) occupy residues 33–53 (FGSL…FLAM), 77–98 (WLIR…FIHV), 113–133 (WNIG…GYVL), and 178–198 (FFAF…VHLL). Heme b is bound by residues histidine 83 and histidine 97. Histidine 182 and histidine 196 together coordinate heme b. Histidine 201 serves as a coordination point for a ubiquinone. 4 consecutive transmembrane segments (helical) span residues 226 to 246 (TKDL…ALFF), 288 to 308 (LGGV…PLLN), 320 to 340 (VTQV…WIGG), and 347 to 367 (FTMI…ILIP).

It belongs to the cytochrome b family. As to quaternary structure, the cytochrome bc1 complex contains 11 subunits: 3 respiratory subunits (MT-CYB, CYC1 and UQCRFS1), 2 core proteins (UQCRC1 and UQCRC2) and 6 low-molecular weight proteins (UQCRH/QCR6, UQCRB/QCR7, UQCRQ/QCR8, UQCR10/QCR9, UQCR11/QCR10 and a cleavage product of UQCRFS1). This cytochrome bc1 complex then forms a dimer. Heme b is required as a cofactor.

Its subcellular location is the mitochondrion inner membrane. Its function is as follows. Component of the ubiquinol-cytochrome c reductase complex (complex III or cytochrome b-c1 complex) that is part of the mitochondrial respiratory chain. The b-c1 complex mediates electron transfer from ubiquinol to cytochrome c. Contributes to the generation of a proton gradient across the mitochondrial membrane that is then used for ATP synthesis. This chain is Cytochrome b (MT-CYB), found in Akodon lutescens puer (Altiplano grass mouse).